Consider the following 819-residue polypeptide: MHAMESRVLLRTFCVILGLEAVWGLGVDPSLQIDVLSELELGESTAGVRQVPGLHNGTKAFLFQDSPRSIKAPIATAERFFQKLRNKHEFTILVTLKQIHLNSGVILSIHHLDHRYLELESSGHRNEIRLHYRSGTHRPHTEVFPYILADAKWHKLSLAFSASHLILHIDCNKIYERVVEMPSTDLPLGTTFWLGQRNNAHGYFKGIMQDVQLLVMPQGFIAQCPDLNRTCPTCNDFHGLVQKIMELQDILSKTSAKLSRAEQRMNRLDQCYCERTCTMKGTTYREFESWTDGCKNCTCLNGTIQCETLVCPAPDCPAKSAPAYVDGKCCKECKSTCQFQGRSYFEGERSTVFSASGMCVLYECKDQTMKLVENAGCPALDCPESHQIALSHSCCKVCKGYDFCSEKHTCMENSVCRNLNDRAVCSCRDGFRALREDNAYCEDIDECAEGRHYCRENTMCVNTPGSFLCICQTGYIRIDDYSCTEHDECLTNQHNCDENALCFNTVGGHNCVCKPGYTGNGTTCKAFCKDGCRNGGACIAANVCACPQGFTGPSCETDIDECSEGFVQCDSRANCINLPGWYHCECRDGYHDNGMFAPGGESCEDIDECGTGRHSCANDTICFNLDGGYDCRCPHGKNCTGDCVHDGKVKHNGQIWVLENDRCSVCSCQTGFVMCRRMVCDCENPTVDLSCCPECDPRLSSQCLHQNGETVYNSGDTWVQDCRQCRCLQGEVDCWPLACPEVECEFSVLPENECCPRCVTDPCQADTIRNDITKTCLDEMNVVRFTGSSWIKHGTECTLCQCKNGHVCCSVDPQCLQEL.

The signal sequence occupies residues 1–24; it reads MHAMESRVLLRTFCVILGLEAVWG. N-linked (GlcNAc...) asparagine glycosylation is found at asparagine 56, asparagine 228, asparagine 296, and asparagine 301. A Laminin G-like domain is found at 58-231; that stretch reads TKAFLFQDSP…AQCPDLNRTC (174 aa). The VWFC 1 domain occupies 275-334; the sequence is RTCTMKGTTYREFESWTDGCKNCTCLNGTIQCETLVCPAPDCPAKSAPAYVDGKCCKECK. The EGF-like 1 domain occupies 400–442; it reads GYDFCSEKHTCMENSVCRNLNDRAVCSCRDGFRALREDNAYCE. Cystine bridges form between cysteine 404–cysteine 416, cysteine 410–cysteine 425, and cysteine 427–cysteine 441. Ca(2+) contacts are provided by aspartate 443, isoleucine 444, and glutamate 446. In terms of domain architecture, EGF-like 2; calcium-binding spans 443 to 484; it reads DIDECAEGRHYCRENTMCVNTPGSFLCICQTGYIRIDDYSCT. 9 cysteine pairs are disulfide-bonded: cysteine 447/cysteine 460, cysteine 454/cysteine 469, cysteine 471/cysteine 483, cysteine 489/cysteine 502, cysteine 496/cysteine 511, cysteine 513/cysteine 524, cysteine 528/cysteine 538, cysteine 532/cysteine 544, and cysteine 546/cysteine 555. Ca(2+) is bound by residues asparagine 462, threonine 463, and serine 466. The EGF-like 3; calcium-binding domain occupies 485-525; sequence EHDECLTNQHNCDENALCFNTVGGHNCVCKPGYTGNGTTCK. Asparagine 520 carries an N-linked (GlcNAc...) asparagine glycan. Positions 526-556 constitute an EGF-like 4 domain; it reads AFCKDGCRNGGACIAANVCACPQGFTGPSCE. The O-linked (GlcNAc...) threonine glycan is linked to threonine 551. Ca(2+) is bound by residues aspartate 558, isoleucine 559, and glutamate 561. The region spanning 558-604 is the EGF-like 5; calcium-binding domain; the sequence is DIDECSEGFVQCDSRANCINLPGWYHCECRDGYHDNGMFAPGGESCE. 3 cysteine pairs are disulfide-bonded: cysteine 562-cysteine 575, cysteine 569-cysteine 584, and cysteine 586-cysteine 603. The Ca(2+) site is built by asparagine 577, leucine 578, and tryptophan 581. Ca(2+) is bound by residues aspartate 605, isoleucine 606, and glutamate 608. Positions 605-640 constitute an EGF-like 6; calcium-binding domain; sequence DIDECGTGRHSCANDTICFNLDGGYDCRCPHGKNCT. 3 disulfide bridges follow: cysteine 609–cysteine 622, cysteine 616–cysteine 631, and cysteine 633–cysteine 639. Asparagine 618 carries an N-linked (GlcNAc...) asparagine glycan. Residues asparagine 624, leucine 625, and glycine 628 each contribute to the Ca(2+) site. Asparagine 638 carries an N-linked (GlcNAc...) asparagine glycan. 2 VWFC domains span residues 641-696 and 701-759; these read GDCV…PECD and SQCL…PRCV.

As to quaternary structure, homotrimer. Binds to PRKCB. Interacts with NICOL1; this interaction triggers epididymal differentiation. Binds to PRKCB. As to expression, widely expressed. Expressed in cortical astrocytes but not in neuron. Widely expressed in brain. High expression is observed in telencephalic and diencephalic glutamatergic neurons, while no expression is found in GABAergic and GNRH neurons.

The protein localises to the secreted. Its subcellular location is the cytoplasm. Its function is as follows. Plays multiple roles In neural tissues, regulates neuronal proliferation, survival, differentiation, polarization, as well as axon guidance and synaptic functions. Plays an important role in axon development during neuronal differentiation through the MAPK intracellular signaling pathway. Via binding to its receptor ROBO3, plays a role in axon guidance, functioning as a repulsive axon guidance cue that contributes to commissural axon guidance to the midline. Required for neuron survival through the modulation of MAPK signaling pathways too. Involved in the regulation of hypothalamic GNRH secretion and the control of puberty. In terms of biological role, epididymal-secreted protein that signals through a ROS1-pathway to regulate the epididymal initial segment (IS) maturation, sperm maturation and male fertility. Acts as an endogenous inhibitor of PRKCB in glia. This chain is Protein kinase C-binding protein NELL2 (Nell2), found in Rattus norvegicus (Rat).